Here is a 336-residue protein sequence, read N- to C-terminus: MSKINLLLLCGGGSAEHDISLLSANYFETSLAKSEQFNVLRVVLDKFGQYQTAAGDDCELTNNREIRFRDETKPAWPVDYVIPCIHGYPGETGDIQSYFNLIQLPYFGCESEASSNCFNKITAKMWFSALGIPNTPYIFLNQYDDDAIAQTQAALENWGSIFVKAASQGSSVGCYKVDDSSKVADVLKDAFGYAPYVIVEKTIKARELEVAVYEYQGEVVATLPGEIICDSNTFYTFDEKYAKSSKARTDVVAQNVPTDISEQIRAYAIKAFKGMKLRHLSRIDFFLTQDNEILLNEINTFPGSTPISMFPKMLQNHGHDFTEYLSLVINGQLAAK.

The region spanning 124-330 (KMWFSALGIP…FTEYLSLVIN (207 aa)) is the ATP-grasp domain. An ATP-binding site is contributed by 154 to 209 (ALENWGSIFVKAASQGSSVGCYKVDDSSKVADVLKDAFGYAPYVIVEKTIKARELE). Residues D284, E297, and N299 each coordinate Mg(2+).

Belongs to the D-alanine--D-alanine ligase family. Mg(2+) serves as cofactor. The cofactor is Mn(2+).

The protein resides in the cytoplasm. The catalysed reaction is 2 D-alanine + ATP = D-alanyl-D-alanine + ADP + phosphate + H(+). Its pathway is cell wall biogenesis; peptidoglycan biosynthesis. In terms of biological role, cell wall formation. This chain is D-alanine--D-alanine ligase, found in Shewanella sp. (strain ANA-3).